The chain runs to 807 residues: Probable phosphoketolase (807 aa).

The protein belongs to the XFP family. Requires thiamine diphosphate as cofactor.

The polypeptide is Probable phosphoketolase (Nitrosospira multiformis (strain ATCC 25196 / NCIMB 11849 / C 71)).